A 752-amino-acid chain; its full sequence is Two pore channel protein 2 (752 aa).

Residues 1–84 are Cytoplasmic-facing; it reads MAEPQAESEP…RRYYSNVCQR (84 aa). A helical transmembrane segment spans residues 85-105; the sequence is TLSFTIFLILFLAFIETPSSL. Residues 106–127 are Extracellular-facing; that stretch reads TSTADVRYRAAPWEPPCGLTES. A helical membrane pass occupies residues 128–148; the sequence is VEVLCLLVFAADLSVKGYLFG. Over 149 to 155 the chain is Cytoplasmic; it reads WAHFQKN. Residues 156-176 traverse the membrane as a helical segment; it reads LWLLGYLVVLVVSLVDWTVSL. At 177-183 the chain is on the extracellular side; that stretch reads SLVCHEP. A helical membrane pass occupies residues 184–204; the sequence is LRIRRLLRPFFLLQNSSMMKK. Residues 203–207 are interaction with phosphatidylinositol 3,5-bisphosphate; that stretch reads KKTLK. Residues 205–218 lie on the Cytoplasmic side of the membrane; the sequence is TLKCIRWSLPEMAS. Residues 219-239 traverse the membrane as a helical segment; sequence VGLLLAIHLCLFTMFGMLLFA. Residues 240–254 lie on the Extracellular side of the membrane; sequence GGKQDDGQDRERLTY. The segment at residues 255-279 is an intramembrane region (helical; Pore-forming); the sequence is FQNLPESLTSLLVLLTTANNPDVMI. Residues 280-289 are Extracellular-facing; it reads PAYSKNRAYA. The chain crosses the membrane as a helical span at residues 290 to 310; it reads IFFIVFTVIGSLFLMNLLTAI. Over 311-436 the chain is Cytoplasmic; the sequence is IYSQFRGYLM…FLFGHYYFDY (126 aa). A helical transmembrane segment spans residues 437–459; that stretch reads LGNLIALANLVSICVFLVLDADV. The Extracellular segment spans residues 460 to 465; it reads LPAERD. The chain crosses the membrane as a helical span at residues 466–486; it reads DFILGILNCVFIVYYLLEMLL. The Cytoplasmic portion of the chain corresponds to 487 to 502; sequence KVFALGLRGYLSYPSN. Residues 503–523 traverse the membrane as a helical segment; that stretch reads VFDGLLTVVLLVLEISTLAVY. The Extracellular portion of the chain corresponds to 524 to 554; it reads RLPHPGWRPEMVGLLSLWDMTRMLNMLIVFR. A helical transmembrane segment spans residues 555-575; sequence FLRIIPSMKLMAVVASTVLGL. Topologically, residues 576–580 are cytoplasmic; the sequence is VQNMR. The helical transmembrane segment at 581–601 threads the bilayer; the sequence is AFGGILVVVYYVFAIIGINLF. Over 602-635 the chain is Extracellular; sequence RGVIVALPGNSSLAPANGSAPCGSFEQLEYWANN. N-linked (GlcNAc...) asparagine glycans are attached at residues asparagine 611 and asparagine 618. Residues 636-658 constitute an intramembrane region (helical; Pore-forming); the sequence is FDDFAAALVTLWNLMVVNNWQVF. Residues 659 to 673 are Extracellular-facing; the sequence is LDAYRRYSGPWSKIY. Residues 674-694 traverse the membrane as a helical segment; it reads FVLWWLVSSVIWVNLFLALIL. Residues 695–752 are Cytoplasmic-facing; sequence ENFLHKWDPRSHLQPLAGTPEATYQMTVELLFRDILEEPGEDELTERLSQHPHLWLCR.

The protein belongs to the calcium channel alpha-1 subunit (TC 1.A.1.11) family. Two pore calcium channel subfamily. Homodimer. Interacts with LRRK2. Interacts with HAX1. Interacts with MTOR; the interaction is required for TPCN2 ATP sensitivity. Found in a complex with LSM12, TPCN1 and TPCN2. Interacts with LSM12. N-glycosylated. In terms of tissue distribution, widely expressed. Expressed at high level in liver and kidney.

It localises to the late endosome membrane. The protein localises to the lysosome membrane. It is found in the melanosome membrane. It carries out the reaction Na(+)(in) = Na(+)(out). It catalyses the reaction Ca(2+)(in) = Ca(2+)(out). Its activity is regulated as follows. Regulated by Mg(2+) ions, cytosolic Mg(2+) selectively inhibits outward current while lysosomal Mg(2+) modestly inhibits both the outward and inward currents. In the absence of Mg(2+), NAADP readily activates TPCN2, with properties similar to PI(3,5)P2. Na(+) current is inhibited by ATP in a MTORC-dependent manner. ATP sensitivity is independent of PI(3,5)P2. Both current elicited by PI(3,5)P2 as well as NAADP are inhibited by tetrandrine. Functionally, intracellular channel initially characterized as a non-selective Ca(2+)-permeable channel activated by NAADP (nicotinic acid adenine dinucleotide phosphate), it is also a highly-selective Na(+) channel activated directly by PI(3,5)P2 (phosphatidylinositol 3,5-bisphosphate). Localizes to the lysosomal and late endosome membranes where it regulates organellar membrane excitability, membrane trafficking, and pH homeostasis. Is associated with a plethora of physiological processes, including mTOR-dependent nutrient sensing, skin pigmentation and autophagy. Ion selectivity is not fixed but rather agonist-dependent and under defined ionic conditions, can be readily activated by both NAADP and PI(3,5)P2. As calcium channel, it increases the pH in the lysosomal lumen, as sodium channel, it promotes lysosomal exocytosis. Plays a crucial role in endolysosomal trafficking in the endolysosomal degradation pathway and is potentially involved in the homeostatic control of many macromolecules and cell metabolites. Also expressed in melanosomes of pigmented cells where mediates a Ca(2+) channel and/or PI(3,5)P2-activated melanosomal Na(+) channel to acidify pH and inhibit tyrosinase activity required for melanogenesis and pigmentation. Unlike the voltage-dependent TPCN1, TPCN2 is voltage independent and can be activated solely by PI(3,5)P2 binding. In contrast, PI(4,5)P2, PI(3,4)P2, PI(3)P and PI(5)P have no obvious effect on channel activation. (Microbial infection) During Ebola virus (EBOV) infection, controls the movement of endosomes containing virus particles and is required by EBOV to escape from the endosomal network into the cell cytoplasm. Its function is as follows. (Microbial infection) Required for cell entry of coronaviruses SARS-CoV and SARS-CoV-2, as well as human coronavirus EMC (HCoV-EMC), by endocytosis. This is Two pore channel protein 2 from Homo sapiens (Human).